The chain runs to 78 residues: Acyl carrier protein (78 aa).

Residues 2–77 (STIEERVKKI…AAIDYINGHQ (76 aa)) form the Carrier domain. Serine 37 is modified (O-(pantetheine 4'-phosphoryl)serine).

Belongs to the acyl carrier protein (ACP) family. Post-translationally, 4'-phosphopantetheine is transferred from CoA to a specific serine of apo-ACP by AcpS. This modification is essential for activity because fatty acids are bound in thioester linkage to the sulfhydryl of the prosthetic group.

The protein resides in the cytoplasm. It functions in the pathway lipid metabolism; fatty acid biosynthesis. In terms of biological role, carrier of the growing fatty acid chain in fatty acid biosynthesis. In Erwinia tasmaniensis (strain DSM 17950 / CFBP 7177 / CIP 109463 / NCPPB 4357 / Et1/99), this protein is Acyl carrier protein.